A 445-amino-acid chain; its full sequence is Glutamate--tRNA ligase 2 (445 aa).

The 'HIGH' region motif lies at Pro10–Asn20. The 'KMSKS' region signature appears at Lys240 to Arg244. Lys243 serves as a coordination point for ATP.

It belongs to the class-I aminoacyl-tRNA synthetase family. Glutamate--tRNA ligase type 1 subfamily. As to quaternary structure, monomer.

Its subcellular location is the cytoplasm. The enzyme catalyses tRNA(Glu) + L-glutamate + ATP = L-glutamyl-tRNA(Glu) + AMP + diphosphate. In terms of biological role, catalyzes the attachment of glutamate to tRNA(Glu) in a two-step reaction: glutamate is first activated by ATP to form Glu-AMP and then transferred to the acceptor end of tRNA(Glu). The sequence is that of Glutamate--tRNA ligase 2 from Rickettsia canadensis (strain McKiel).